Here is a 458-residue protein sequence, read N- to C-terminus: Transmembrane protein adipocyte-associated 1 homolog (458 aa).

N-linked (GlcNAc...) asparagine glycans are attached at residues Asn21 and Asn45. Helical transmembrane passes span 81 to 101 (VILV…GSVI), 114 to 134 (AFTL…AYSM), 152 to 172 (IIIK…GLLF), 181 to 201 (ILIA…VQVI), 225 to 245 (FLFW…IMCL), 263 to 283 (LIYC…AALI), and 291 to 311 (LCFV…IIYF). Residues Asn323 and Asn324 are each glycosylated (N-linked (GlcNAc...) asparagine). The interval 409–458 (RTGSDDYAHHRDSMLSEPSTGTTTRHLKGLGPQGSLVFEDDPSSLTSLRM) is disordered. The segment covering 411–422 (GSDDYAHHRDSM) has biased composition (basic and acidic residues).

It belongs to the UPF0359 family.

It localises to the membrane. This chain is Transmembrane protein adipocyte-associated 1 homolog (tpra-1), found in Caenorhabditis elegans.